A 402-amino-acid chain; its full sequence is UPF0261 protein y4oU (402 aa).

Belongs to the UPF0261 family.

This is UPF0261 protein y4oU from Sinorhizobium fredii (strain NBRC 101917 / NGR234).